The chain runs to 239 residues: Ribosomal RNA small subunit methyltransferase G (239 aa).

S-adenosyl-L-methionine contacts are provided by residues Gly76, Phe81, 99–101 (DSS), 128–129 (IE), and Arg147.

The protein belongs to the methyltransferase superfamily. RNA methyltransferase RsmG family.

The protein localises to the cytoplasm. In terms of biological role, specifically methylates the N7 position of a guanine in 16S rRNA. This Prochlorococcus marinus (strain MIT 9515) protein is Ribosomal RNA small subunit methyltransferase G.